We begin with the raw amino-acid sequence, 728 residues long: Ophiobolin F synthase oblA (728 aa).

The (7Z)-ophiobola-7,19-dien-3-ol synthase stretch occupies residues 1 to 322 (MEYKYSTIVD…RYHFPGRWNE (322 aa)). D93 and D97 together coordinate Mg(2+). A substrate-binding site is contributed by D93. The DDXXD 1 signature appears at 93–97 (DDEID). Residues 182–185 (RCMD), N226, 230–234 (SYEKE), and 313–314 (RY) contribute to the substrate site. The NSE/DTE motif lies at 226–234 (NDLFSYEKE). The interval 323-728 (LQKLRAEHGI…LRLMVDMLKV (406 aa)) is geranylfarnesyl diphosphate synthase. Residues 362 to 371 (GINGTNGVNG) are compositionally biased toward low complexity. The interval 362–394 (GINGTNGVNGKRNRDEDGDENDARINGNGFKKP) is disordered. 3 residues coordinate isopentenyl diphosphate: K439, R442, and H471. D478 and D482 together coordinate Mg(2+). A DDXXD 2 motif is present at residues 478-482 (DDIED). R487 lines the dimethylallyl diphosphate pocket. R488 contributes to the isopentenyl diphosphate binding site. 6 residues coordinate dimethylallyl diphosphate: K565, T566, Q604, N611, K621, and K631.

In the N-terminal section; belongs to the terpene synthase family. It in the C-terminal section; belongs to the FPP/GGPP synthase family. It depends on Mg(2+) as a cofactor.

It carries out the reaction isopentenyl diphosphate + (2E,6E)-farnesyl diphosphate = (2E,6E,10E)-geranylgeranyl diphosphate + diphosphate. The catalysed reaction is isopentenyl diphosphate + (2E,6E,10E)-geranylgeranyl diphosphate = (2E,6E,10E,14E)-geranylfarnesyl diphosphate + diphosphate. It catalyses the reaction (2E,6E,10E,14E)-geranylfarnesyl diphosphate + H2O = ophiobolin F + diphosphate. Its pathway is secondary metabolite biosynthesis; terpenoid biosynthesis. Functionally, bifunctional sesterterpene synthase; part of the gene cluster that mediates the biosynthesis of the sesterterpenes ophiobolins, fungal phytotoxins with potential anti-cancer activities. The first step of the pathway is performed by the sesterterpene synthase oblA that possesses both prenyl transferase and terpene cyclase activity, converting isopentenyl diphosphate and dimethylallyl diphosphate into geranylfarnesyl diphosphate (GFPP) and further converting GFPP into ophiobolin F, respectively. Other sesterterpenoids (C(25) terpenoids) are found as minor products of oblA. The cytochrome P450 monooxygenase oblB then catalyzes a four-step oxidative transformation of ophiobolin F to yield ophiobolin C. The function of the cytochrome P450 monooxygenase oblE has still to be determined. This is Ophiobolin F synthase oblA from Emericella variicolor (Aspergillus stellatus).